The chain runs to 117 residues: Photosystem II reaction center Psb28 protein (117 aa).

It belongs to the Psb28 family. As to quaternary structure, part of the photosystem II complex.

The protein resides in the cellular thylakoid membrane. In Prochlorococcus marinus (strain MIT 9211), this protein is Photosystem II reaction center Psb28 protein.